A 465-amino-acid polypeptide reads, in one-letter code: MAMSVNVSSSSSSGIINSRFGVSLEPKVSQIGSLRLLDRVHVAPVSLNLSGKRSSSVKPLNAEPKTKDSMIPLAATMVAEIAEEVEVVEIEDFEELAKKLENASPLEIMDKALEKYGNDIAIAFSGAEDVALIEYAHLTGRPFRVFSLDTGRLNPETYRFFDAVEKHYGIRIEYMFPDSVEVQGLVRSKGLFSFYEDGHQECCRVRKVRPLRRALKGLKAWITGQRKDQSPGTRSEIPVVQVDPVFEGLDGGVGSLVKWNPVANVEGNDVWNFLRTMDVPVNTLHAAGYISIGCEPCTKAVLPGQHEREGRWWWEDAKAKECGLHKGNVKENSDDAKVNGESKSAVADIFKSENLVTLSRQGIENLMKLENRKEPWIVVLYAPWCPFCQAMEASYDELADKLAGSGIKVAKFRADGDQKEFAKQELQLGSFPTILVFPKNSSRPIKYPSEKRDVESLTSFLNLVR.

A chloroplast-targeting transit peptide spans 1–53 (MAMSVNVSSSSSSGIINSRFGVSLEPKVSQIGSLRLLDRVHVAPVSLNLSGKR). A reductase domain region spans residues 73 to 327 (LAATMVAEIA…KAKECGLHKG (255 aa)). A Thioredoxin domain is found at 344-465 (SAVADIFKSE…SLTSFLNLVR (122 aa)). Residues cysteine 385 and cysteine 388 each act as nucleophile in the active site. Cysteine 385 and cysteine 388 are disulfide-bonded.

It belongs to the APS reductase family. Requires [4Fe-4S] cluster as cofactor. Leaves, roots and stem.

The protein resides in the plastid. The protein localises to the chloroplast. It carries out the reaction glutathione disulfide + sulfite + AMP + 2 H(+) = adenosine 5'-phosphosulfate + 2 glutathione. With respect to regulation, stimulated by sodium sulfate &gt; ammonium sulfate and is sensitive to inactivation by 5'AMP. In terms of biological role, reduces sulfate for Cys biosynthesis. Substrate preference is adenosine-5'-phosphosulfate (APS) &gt;&gt; 3'-phosphoadenosine-5'-phosphosulfate (PAPS). Uses glutathione or DTT as source of protons. In Arabidopsis thaliana (Mouse-ear cress), this protein is 5'-adenylylsulfate reductase 1, chloroplastic (APR1).